The sequence spans 910 residues: Valine--tRNA ligase (910 aa).

The 'HIGH' region signature appears at 45-55 (PNVTGSLHMGH). The 'KMSKS' region motif lies at 554 to 558 (KMSKS). Residue Lys-557 coordinates ATP. A coiled-coil region spans residues 842-910 (DLQAEAARLA…TAESRIRDAS (69 aa)).

Belongs to the class-I aminoacyl-tRNA synthetase family. ValS type 1 subfamily. Monomer.

It localises to the cytoplasm. It catalyses the reaction tRNA(Val) + L-valine + ATP = L-valyl-tRNA(Val) + AMP + diphosphate. Functionally, catalyzes the attachment of valine to tRNA(Val). As ValRS can inadvertently accommodate and process structurally similar amino acids such as threonine, to avoid such errors, it has a 'posttransfer' editing activity that hydrolyzes mischarged Thr-tRNA(Val) in a tRNA-dependent manner. The chain is Valine--tRNA ligase from Brucella suis biovar 1 (strain 1330).